A 127-amino-acid chain; its full sequence is Holo-[acyl-carrier-protein] synthase (127 aa).

The Mg(2+) site is built by Asp-7 and Glu-56.

This sequence belongs to the P-Pant transferase superfamily. AcpS family. It depends on Mg(2+) as a cofactor.

It is found in the cytoplasm. It carries out the reaction apo-[ACP] + CoA = holo-[ACP] + adenosine 3',5'-bisphosphate + H(+). Transfers the 4'-phosphopantetheine moiety from coenzyme A to a Ser of acyl-carrier-protein. This is Holo-[acyl-carrier-protein] synthase from Onion yellows phytoplasma (strain OY-M).